A 95-amino-acid polypeptide reads, in one-letter code: Aspartyl/glutamyl-tRNA(Asn/Gln) amidotransferase subunit C (95 aa).

This sequence belongs to the GatC family. As to quaternary structure, heterotrimer of A, B and C subunits.

The enzyme catalyses L-glutamyl-tRNA(Gln) + L-glutamine + ATP + H2O = L-glutaminyl-tRNA(Gln) + L-glutamate + ADP + phosphate + H(+). It carries out the reaction L-aspartyl-tRNA(Asn) + L-glutamine + ATP + H2O = L-asparaginyl-tRNA(Asn) + L-glutamate + ADP + phosphate + 2 H(+). Allows the formation of correctly charged Asn-tRNA(Asn) or Gln-tRNA(Gln) through the transamidation of misacylated Asp-tRNA(Asn) or Glu-tRNA(Gln) in organisms which lack either or both of asparaginyl-tRNA or glutaminyl-tRNA synthetases. The reaction takes place in the presence of glutamine and ATP through an activated phospho-Asp-tRNA(Asn) or phospho-Glu-tRNA(Gln). This is Aspartyl/glutamyl-tRNA(Asn/Gln) amidotransferase subunit C from Azoarcus sp. (strain BH72).